Consider the following 180-residue polypeptide: Bifunctional bis(5'-adenosyl)-triphosphatase/adenylylsulfatase FHIT (180 aa).

One can recognise an HIT domain in the interval 27–134 (SYAFGPYKID…LPRKGGDFEK (108 aa)). The substrate site is built by asparagine 52 and glutamine 108. The Histidine triad motif motif lies at 119–123 (HVHIH). Histidine 121 functions as the Tele-AMP-histidine intermediate in the catalytic mechanism. Substrate is bound at residue histidine 123.

It carries out the reaction P(1),P(3)-bis(5'-adenosyl) triphosphate + H2O = AMP + ADP + 2 H(+). The enzyme catalyses adenosine 5'-phosphosulfate + H2O = sulfate + AMP + 2 H(+). The catalysed reaction is adenosine 5'-phosphosulfate + NH4(+) = adenosine 5'-phosphoramidate + sulfate + 2 H(+). It catalyses the reaction adenosine 5'-phosphoramidate + H2O = AMP + NH4(+). Its function is as follows. Possesses dinucleoside triphosphate hydrolase activity. Cleaves P(1)-P(3)-bis(5'-adenosyl) triphosphate (Ap3A) to yield AMP and ADP. Exhibits adenylylsulfatase activity, hydrolyzing adenosine 5'-phosphosulfate to yield AMP and sulfate. Exhibits adenosine 5'-monophosphoramidase activity, hydrolyzing purine nucleotide phosphoramidates with a single phosphate group such as adenosine 5'monophosphoramidate (AMP-NH2) to yield AMP and NH2. Exhibits adenylylsulfate-ammonia adenylyltransferase, catalyzing the ammonolysis of adenosine 5'-phosphosulfate resulting in the formation of adenosine 5'-phosphoramidate. The polypeptide is Bifunctional bis(5'-adenosyl)-triphosphatase/adenylylsulfatase FHIT (Arabidopsis thaliana (Mouse-ear cress)).